The sequence spans 218 residues: MLVVDSKTMKKIDQYAIDVLKVPSICLVERAALAVIKNINLEKRTSFAIVVGVGNNGADGLAIARNLLAMGKYVEIYIVGDLTKQSQDFKLNLDSCKRLTDKIFEPKSIEDLAIMERNLEEVSTIIDAIFGTGLNRTVGGMQSYMISLINRTMKYTISVDIPSGLDGDSGRNWGEVVDSDLIISMQIMKRGVYEKSHFKDKCIVEDIGIPQKAIRAIL.

The 207-residue stretch at 9–215 folds into the YjeF N-terminal domain; that stretch reads MKKIDQYAID…DIGIPQKAIR (207 aa). 55–59 contributes to the (6S)-NADPHX binding site; sequence NNGAD. Positions 56 and 127 each coordinate K(+). Residues 131–137 and Asp-160 contribute to the (6S)-NADPHX site; that span reads GTGLNRT. K(+) is bound at residue Ser-163.

It belongs to the NnrE/AIBP family. The cofactor is K(+).

The enzyme catalyses (6R)-NADHX = (6S)-NADHX. The catalysed reaction is (6R)-NADPHX = (6S)-NADPHX. In terms of biological role, catalyzes the epimerization of the S- and R-forms of NAD(P)HX, a damaged form of NAD(P)H that is a result of enzymatic or heat-dependent hydration. This is a prerequisite for the S-specific NAD(P)H-hydrate dehydratase to allow the repair of both epimers of NAD(P)HX. The polypeptide is NAD(P)H-hydrate epimerase (Anaerococcus prevotii (strain ATCC 9321 / DSM 20548 / JCM 6508 / NCTC 11806 / PC1) (Peptostreptococcus prevotii)).